Here is a 238-residue protein sequence, read N- to C-terminus: 6-phosphogluconolactonase (238 aa).

Belongs to the glucosamine/galactosamine-6-phosphate isomerase family. 6-phosphogluconolactonase subfamily.

It catalyses the reaction 6-phospho-D-glucono-1,5-lactone + H2O = 6-phospho-D-gluconate + H(+). The protein operates within carbohydrate degradation; pentose phosphate pathway; D-ribulose 5-phosphate from D-glucose 6-phosphate (oxidative stage): step 2/3. Its function is as follows. Hydrolysis of 6-phosphogluconolactone to 6-phosphogluconate. This is 6-phosphogluconolactonase (pgl) from Pseudomonas aeruginosa (strain ATCC 15692 / DSM 22644 / CIP 104116 / JCM 14847 / LMG 12228 / 1C / PRS 101 / PAO1).